The primary structure comprises 168 residues: RNA pyrophosphohydrolase (168 aa).

A Nudix hydrolase domain is found at 8 to 160; that stretch reads PYRPCVGLAI…KRQVYERVAR (153 aa). The Nudix box signature appears at 47–68; sequence GGIDKGEEPYEAALRELYEETS.

This sequence belongs to the Nudix hydrolase family. RppH subfamily. The cofactor is a divalent metal cation.

In terms of biological role, accelerates the degradation of transcripts by removing pyrophosphate from the 5'-end of triphosphorylated RNA, leading to a more labile monophosphorylated state that can stimulate subsequent ribonuclease cleavage. This chain is RNA pyrophosphohydrolase, found in Azorhizobium caulinodans (strain ATCC 43989 / DSM 5975 / JCM 20966 / LMG 6465 / NBRC 14845 / NCIMB 13405 / ORS 571).